We begin with the raw amino-acid sequence, 351 residues long: 3-dehydroquinate synthase (351 aa).

Residues 60–65 (DGEEYK), 94–98 (GVISD), 118–119 (TT), lysine 131, lysine 140, and 158–161 (FLKT) each bind NAD(+). The Zn(2+) site is built by glutamate 173, histidine 239, and histidine 256.

This sequence belongs to the sugar phosphate cyclases superfamily. Dehydroquinate synthase family. The cofactor is Co(2+). Zn(2+) serves as cofactor. NAD(+) is required as a cofactor.

The protein localises to the cytoplasm. It carries out the reaction 7-phospho-2-dehydro-3-deoxy-D-arabino-heptonate = 3-dehydroquinate + phosphate. It functions in the pathway metabolic intermediate biosynthesis; chorismate biosynthesis; chorismate from D-erythrose 4-phosphate and phosphoenolpyruvate: step 2/7. Its function is as follows. Catalyzes the conversion of 3-deoxy-D-arabino-heptulosonate 7-phosphate (DAHP) to dehydroquinate (DHQ). The chain is 3-dehydroquinate synthase from Campylobacter jejuni subsp. jejuni serotype O:6 (strain 81116 / NCTC 11828).